The sequence spans 203 residues: Small ribosomal subunit protein uS4 (203 aa).

An S4 RNA-binding domain is found at 93 to 154 (RRLDNVVFRA…KSRNMDAVTD (62 aa)).

The protein belongs to the universal ribosomal protein uS4 family. In terms of assembly, part of the 30S ribosomal subunit. Contacts protein S5. The interaction surface between S4 and S5 is involved in control of translational fidelity.

Its function is as follows. One of the primary rRNA binding proteins, it binds directly to 16S rRNA where it nucleates assembly of the body of the 30S subunit. In terms of biological role, with S5 and S12 plays an important role in translational accuracy. This Chlorobium luteolum (strain DSM 273 / BCRC 81028 / 2530) (Pelodictyon luteolum) protein is Small ribosomal subunit protein uS4.